A 396-amino-acid polypeptide reads, in one-letter code: Ribosomal RNA large subunit methyltransferase I (396 aa).

A PUA domain is found at 2 to 79 (TSAVYLQAGR…EKEVIDQHFF (78 aa)).

The protein belongs to the methyltransferase superfamily. RlmI family.

The protein resides in the cytoplasm. It carries out the reaction cytidine(1962) in 23S rRNA + S-adenosyl-L-methionine = 5-methylcytidine(1962) in 23S rRNA + S-adenosyl-L-homocysteine + H(+). In terms of biological role, specifically methylates the cytosine at position 1962 (m5C1962) of 23S rRNA. This chain is Ribosomal RNA large subunit methyltransferase I, found in Pseudoalteromonas translucida (strain TAC 125).